The sequence spans 267 residues: Probable 3-methyl-2-oxobutanoate hydroxymethyltransferase (267 aa).

It belongs to the PanB family.

The catalysed reaction is 3-methyl-2-oxobutanoate + (6R)-5,10-methylene-5,6,7,8-tetrahydrofolate + H2O = 2-dehydropantoate + (6S)-5,6,7,8-tetrahydrofolate. Its pathway is cofactor biosynthesis; (R)-pantothenate biosynthesis; (R)-pantoate from 3-methyl-2-oxobutanoate: step 1/2. The sequence is that of Probable 3-methyl-2-oxobutanoate hydroxymethyltransferase from Schizosaccharomyces pombe (strain 972 / ATCC 24843) (Fission yeast).